Consider the following 145-residue polypeptide: Acidic phospholipase A2 (145 aa).

Residues 1–19 form the signal peptide; sequence MNPAHLLILSAVCVSLLGA. The propeptide occupies 20–27; it reads ANVPPQHL. 7 disulfides stabilise this stretch: Cys38-Cys97, Cys52-Cys144, Cys54-Cys70, Cys69-Cys125, Cys76-Cys118, Cys86-Cys111, and Cys104-Cys116. Ca(2+) contacts are provided by Tyr53, Gly55, and Gly57. The active site involves His73. Asp74 lines the Ca(2+) pocket. The active site involves Asp119.

The protein belongs to the phospholipase A2 family. Group I subfamily. D49 sub-subfamily. It depends on Ca(2+) as a cofactor. In terms of tissue distribution, expressed by the venom gland.

It is found in the secreted. The catalysed reaction is a 1,2-diacyl-sn-glycero-3-phosphocholine + H2O = a 1-acyl-sn-glycero-3-phosphocholine + a fatty acid + H(+). Its function is as follows. PLA2 catalyzes the calcium-dependent hydrolysis of the 2-acyl groups in 3-sn-phosphoglycerides. The polypeptide is Acidic phospholipase A2 (Bungarus multicinctus (Many-banded krait)).